Reading from the N-terminus, the 451-residue chain is Tubulin gamma-2 chain (451 aa).

Serine 131 is subject to Phosphoserine; by BRSK1. 142–148 contacts GTP; sequence AGGTGSG.

Belongs to the tubulin family. Component of the gamma-tubulin ring complex (gTuRC) consisting of TUBGCP2, TUBGCP3, TUBGCP4, TUBGCP5 and TUBGCP6 and gamma-tubulin TUBG1 or TUBG2. TUBGCP2, TUBGCP3, TUBGCP4, TUBGCP5 and TUBGCP6 assemble in a 5:5:2:1:1 stoichiometry; each is associated with a gamma-tubulin, thereby arranging 14 gamma-tubulins in a helical manner. Gamma-tubulin at the first position is blocked by TUBGCP3 at the last position, allowing 13 protafilaments to grow into a microtubule. Interacts with alpha-beta tubulin heterodimers; the interaction allows microtubules to nucleate from the gTuRC. In terms of processing, phosphorylation at Ser-131 by BRSK1 regulates centrosome duplication, possibly by mediating relocation of gamma-tubulin and its associated proteins from the cytoplasm to the centrosome.

The protein localises to the cytoplasm. It is found in the cytoskeleton. It localises to the microtubule organizing center. The protein resides in the centrosome. Functionally, tubulin is the major constituent of microtubules, protein filaments consisting of alpha- and beta-tubulin heterodimers. Gamma-tubulin is a key component of the gamma-tubulin ring complex (gTuRC) which mediates microtubule nucleation. The gTuRC regulates the minus-end nucleation of alpha-beta tubulin heterodimers that grow into microtubule protafilaments, a critical step in centrosome duplication and spindle formation. The polypeptide is Tubulin gamma-2 chain (Tubg2) (Mus musculus (Mouse)).